We begin with the raw amino-acid sequence, 338 residues long: Lipoate-protein ligase A (338 aa).

Residues 29–216 (PATQRVLFLW…AFFAHYGERV (188 aa)) enclose the BPL/LPL catalytic domain. Residues R71, 76-79 (GAVF), and K134 each bind ATP. K134 is a binding site for (R)-lipoate.

It belongs to the LplA family. As to quaternary structure, monomer.

It is found in the cytoplasm. It carries out the reaction L-lysyl-[lipoyl-carrier protein] + (R)-lipoate + ATP = N(6)-[(R)-lipoyl]-L-lysyl-[lipoyl-carrier protein] + AMP + diphosphate + H(+). The protein operates within protein modification; protein lipoylation via exogenous pathway; protein N(6)-(lipoyl)lysine from lipoate: step 1/2. Its pathway is protein modification; protein lipoylation via exogenous pathway; protein N(6)-(lipoyl)lysine from lipoate: step 2/2. Catalyzes both the ATP-dependent activation of exogenously supplied lipoate to lipoyl-AMP and the transfer of the activated lipoyl onto the lipoyl domains of lipoate-dependent enzymes. This chain is Lipoate-protein ligase A, found in Salmonella paratyphi B (strain ATCC BAA-1250 / SPB7).